The chain runs to 268 residues: 4-hydroxy-tetrahydrodipicolinate reductase (268 aa).

NAD(+)-binding positions include 10–15, Asp36, 99–101, and 123–126; these read GASGRM, GTT, and APNM. His156 (proton donor/acceptor) is an active-site residue. Residue His157 participates in (S)-2,3,4,5-tetrahydrodipicolinate binding. Lys160 (proton donor) is an active-site residue. (S)-2,3,4,5-tetrahydrodipicolinate is bound at residue 166 to 167; it reads GT.

This sequence belongs to the DapB family.

It localises to the cytoplasm. It carries out the reaction (S)-2,3,4,5-tetrahydrodipicolinate + NAD(+) + H2O = (2S,4S)-4-hydroxy-2,3,4,5-tetrahydrodipicolinate + NADH + H(+). The catalysed reaction is (S)-2,3,4,5-tetrahydrodipicolinate + NADP(+) + H2O = (2S,4S)-4-hydroxy-2,3,4,5-tetrahydrodipicolinate + NADPH + H(+). Its pathway is amino-acid biosynthesis; L-lysine biosynthesis via DAP pathway; (S)-tetrahydrodipicolinate from L-aspartate: step 4/4. In terms of biological role, catalyzes the conversion of 4-hydroxy-tetrahydrodipicolinate (HTPA) to tetrahydrodipicolinate. This is 4-hydroxy-tetrahydrodipicolinate reductase from Herminiimonas arsenicoxydans.